A 736-amino-acid chain; its full sequence is Copper-exporting P-type ATPase (736 aa).

The segment covering M1 to A17 has biased composition (basic residues). The tract at residues M1–S32 is disordered. 6 consecutive transmembrane segments (helical) span residues F85–L105, S114–F134, F149–W169, V183–V203, G341–L361, and Y369–A389. D426 functions as the 4-aspartylphosphate intermediate in the catalytic mechanism. D426, T428, and D624 together coordinate Mg(2+). The next 2 helical transmembrane spans lie at L682–P702 and L706–I726.

Belongs to the cation transport ATPase (P-type) (TC 3.A.3) family. Type IB subfamily. Requires Mg(2+) as cofactor.

The protein localises to the cell inner membrane. It carries out the reaction Cu(+)(in) + ATP + H2O = Cu(+)(out) + ADP + phosphate + H(+). With respect to regulation, activated by phospholipids, Mg(2+) and Cu(+). In terms of biological role, couples the hydrolysis of ATP with the export of copper. This is Copper-exporting P-type ATPase from Legionella pneumophila subsp. pneumophila (strain Philadelphia 1 / ATCC 33152 / DSM 7513).